The following is a 119-amino-acid chain: Large ribosomal subunit protein uL22 (119 aa).

Belongs to the universal ribosomal protein uL22 family. In terms of assembly, part of the 50S ribosomal subunit.

Its function is as follows. This protein binds specifically to 23S rRNA; its binding is stimulated by other ribosomal proteins, e.g. L4, L17, and L20. It is important during the early stages of 50S assembly. It makes multiple contacts with different domains of the 23S rRNA in the assembled 50S subunit and ribosome. The globular domain of the protein is located near the polypeptide exit tunnel on the outside of the subunit, while an extended beta-hairpin is found that lines the wall of the exit tunnel in the center of the 70S ribosome. The chain is Large ribosomal subunit protein uL22 from Rickettsia akari (strain Hartford).